Consider the following 134-residue polypeptide: Interleukin-5 (134 aa).

An N-terminal signal peptide occupies residues 1–19 (MRMLLHLSLLALGASYMYA). T22 carries an O-linked (GalNAc...) threonine glycan. 2 N-linked (GlcNAc...) asparagine glycosylation sites follow: N47 and N90.

The protein belongs to the IL-5 family. As to quaternary structure, homodimer; disulfide-linked. Interacts with IL5RA. Interacts with CSF2RB.

Its subcellular location is the secreted. Its function is as follows. Homodimeric cytokine expressed predominantly by T-lymphocytes and NK cells that plays an important role in the survival, differentiation, and chemotaxis of eosinophils. Also acts on activated and resting B-cells to induce immunoglobulin production, growth, and differentiation. Mechanistically, exerts its biological effects through a receptor composed of IL5RA subunit and the cytokine receptor common subunit beta/CSF2RB. Binding to the receptor leads to activation of various kinases including LYN, SYK and JAK2 and thereby propagates signals through the RAS-MAPK and JAK-STAT5 pathways respectively. The polypeptide is Interleukin-5 (IL5) (Cercocebus atys (Sooty mangabey)).